Consider the following 514-residue polypeptide: Histidine ammonia-lyase (514 aa).

A cross-link (5-imidazolinone (Ala-Gly)) is located at residues 147–149; the sequence is ASG. S148 carries the 2,3-didehydroalanine (Ser) modification.

Belongs to the PAL/histidase family. Contains an active site 4-methylidene-imidazol-5-one (MIO), which is formed autocatalytically by cyclization and dehydration of residues Ala-Ser-Gly.

Its subcellular location is the cytoplasm. The enzyme catalyses L-histidine = trans-urocanate + NH4(+). It functions in the pathway amino-acid degradation; L-histidine degradation into L-glutamate; N-formimidoyl-L-glutamate from L-histidine: step 1/3. In Gloeobacter violaceus (strain ATCC 29082 / PCC 7421), this protein is Histidine ammonia-lyase.